Consider the following 261-residue polypeptide: RING-H2 finger protein ATL58 (261 aa).

A helical transmembrane segment spans residues 25-45; sequence AFIFSVPICFTFIILFLFYLI. The RING-type; atypical zinc finger occupies 100–142; sequence CSVCLGDYQPNDKLQQIPVCKHTFHMDCIDLWLTSHTTCPLCR. Disordered stretches follow at residues 149–227 and 241–261; these read RSRQ…NDGH and MEED…CRTG. Polar residues predominate over residues 194–221; that stretch reads SGVSSQPESQPVVNHRGVSSQPESQPVN.

It belongs to the RING-type zinc finger family. ATL subfamily.

It is found in the membrane. The catalysed reaction is S-ubiquitinyl-[E2 ubiquitin-conjugating enzyme]-L-cysteine + [acceptor protein]-L-lysine = [E2 ubiquitin-conjugating enzyme]-L-cysteine + N(6)-ubiquitinyl-[acceptor protein]-L-lysine.. Its pathway is protein modification; protein ubiquitination. The polypeptide is RING-H2 finger protein ATL58 (ATL58) (Arabidopsis thaliana (Mouse-ear cress)).